The primary structure comprises 620 residues: Probable potassium transport system protein Kup (620 aa).

Helical transmembrane passes span 7–27 (LALAALGVVFGDIGTSPLYAI), 44–64 (VFGVLSLLVWSLLLIVSLKYL), 98–118 (FFLIAIGLFGAALLYGDGMIT), 135–155 (PAFHDLIIPATVTVLVILFLF), 166–186 (LFGPVILLWFVVLGVLGLVEI), 201–221 (GIMFLLNNQLHGFMVLGAVFL), 245–265 (WAFLVLPALLLNYFGQGALLL), 278–298 (LVPSWGLIPMVILSTSATIIA), 335–355 (IYVPAANWSLMVATISLVIGF), 361–381 (LAAAYGVAVTATMLISTILFY), 394–414 (VLNVMIVVFLLVDLAFFGASA), and 417–437 (LFHGAWFPLVIAAVMFTVMMT).

The protein belongs to the HAK/KUP transporter (TC 2.A.72) family.

It is found in the cell inner membrane. It carries out the reaction K(+)(in) + H(+)(in) = K(+)(out) + H(+)(out). In terms of biological role, transport of potassium into the cell. Likely operates as a K(+):H(+) symporter. The protein is Probable potassium transport system protein Kup of Chlorobium chlorochromatii (strain CaD3).